The primary structure comprises 367 residues: UDP-N-acetylglucosamine--N-acetylmuramyl-(pentapeptide) pyrophosphoryl-undecaprenol N-acetylglucosamine transferase (367 aa).

Residues 22 to 24, N134, R170, S198, I253, and Q298 each bind UDP-N-acetyl-alpha-D-glucosamine; that span reads TGG.

Belongs to the glycosyltransferase 28 family. MurG subfamily.

It localises to the cell inner membrane. The enzyme catalyses di-trans,octa-cis-undecaprenyl diphospho-N-acetyl-alpha-D-muramoyl-L-alanyl-D-glutamyl-meso-2,6-diaminopimeloyl-D-alanyl-D-alanine + UDP-N-acetyl-alpha-D-glucosamine = di-trans,octa-cis-undecaprenyl diphospho-[N-acetyl-alpha-D-glucosaminyl-(1-&gt;4)]-N-acetyl-alpha-D-muramoyl-L-alanyl-D-glutamyl-meso-2,6-diaminopimeloyl-D-alanyl-D-alanine + UDP + H(+). The protein operates within cell wall biogenesis; peptidoglycan biosynthesis. Cell wall formation. Catalyzes the transfer of a GlcNAc subunit on undecaprenyl-pyrophosphoryl-MurNAc-pentapeptide (lipid intermediate I) to form undecaprenyl-pyrophosphoryl-MurNAc-(pentapeptide)GlcNAc (lipid intermediate II). In Xylella fastidiosa (strain M23), this protein is UDP-N-acetylglucosamine--N-acetylmuramyl-(pentapeptide) pyrophosphoryl-undecaprenol N-acetylglucosamine transferase.